Here is a 473-residue protein sequence, read N- to C-terminus: MNHLANNYGYYPQDCRTQYSRMNSAEAELTSLPVHVSLQDRELWDKFSSIGTEMLITKSGRRMFPSCKVTVTGLNPKVKYVVIMDMVPFDNHKYKWNKDCWEVNGSSDPHLPNRFFIHPDSPAPGQKWMQYPISFHKLKLTNNTLNSNGLVVLHSMHKYQPRLHIVQSPDPCTPHNPGAYLRFTFPEAAFIAVTAYQNQEITKLKIDNNPFAKGFRDNGLNRKRFRDKGTQEMQDTDRQVKLDLTANECAAGMSQMVEDVDVSVSSSVDCRDTQNSSSVSLNPFISAFTNPSSAGGAAAHQTHTLLSLSNRHFSSPRESNLNSVCAALPVSQLSTGHTSFSRLNPQETHHNSRPKIQLQPPHPSLQCHDLDVRLPLPPKLSRVQLSESALRNLEMSPLSDCANPRPLTNILNRSCFRASTPSGKLLPNPPQPEQFLRGSEREIYPAVQEYTDQQFTLNSQTEHRPHMRPLTEY.

Positions 43 to 217 form a DNA-binding region, T-box; that stretch reads LWDKFSSIGT…NNPFAKGFRD (175 aa). Positions 342–361 are disordered; sequence RLNPQETHHNSRPKIQLQPP.

In terms of tissue distribution, exclusively expressed by ventral mesendoderm.

The protein resides in the nucleus. Probable transcriptional regulator involved in developmental processes. The polypeptide is T-box transcription factor TBX6L (tbx6l) (Danio rerio (Zebrafish)).